A 613-amino-acid chain; its full sequence is DBH-like monooxygenase protein 1 (613 aa).

The first 19 residues, 1 to 19, serve as a signal peptide directing secretion; it reads MCCWPLLLLWGLLPGTAAG. Residues 20 to 592 lie on the Lumenal side of the membrane; sequence GSGRTYPHRT…TSSSSSLHRD (573 aa). Residues 35-148 form the DOMON domain; it reads GKYWLGWSQR…STVRVIWAYH (114 aa). The N-linked (GlcNAc...) asparagine glycan is linked to Asn-114. The active site involves Tyr-203. 2 disulfide bridges follow: Cys-205-Cys-257 and Cys-242-Cys-269. Cu cation is bound by residues His-235 and His-236. N-linked (GlcNAc...) asparagine glycosylation is present at Asn-247. Residues His-307, His-389, His-391, and Met-464 each contribute to the Cu cation site. 3 disulfides stabilise this stretch: Cys-364-Cys-480, Cys-368-Cys-550, and Cys-443-Cys-465. Residue His-389 is part of the active site. N-linked (GlcNAc...) asparagine glycans are attached at residues Asn-476 and Asn-517. A helical transmembrane segment spans residues 593–613; the sequence is FSINLLVCLLLLSCTLSTKSL.

The protein belongs to the copper type II ascorbate-dependent monooxygenase family. The cofactor is Cu(2+). N-glycosylated. As to expression, highly expressed in lung, kidney, brain and spinal cord.

The protein localises to the endoplasmic reticulum membrane. The chain is DBH-like monooxygenase protein 1 (MOXD1) from Homo sapiens (Human).